The sequence spans 331 residues: Phosphoenolpyruvate transferase (331 aa).

Asp-63 provides a ligand contact to 7,8-didemethyl-8-hydroxy-5-deazariboflavin.

This sequence belongs to the CofD family. In terms of assembly, homodimer. It depends on Mg(2+) as a cofactor.

It carries out the reaction enolpyruvoyl-2-diphospho-5'-guanosine + 7,8-didemethyl-8-hydroxy-5-deazariboflavin = dehydro coenzyme F420-0 + GMP + H(+). It functions in the pathway cofactor biosynthesis; coenzyme F420 biosynthesis. In terms of biological role, catalyzes the transfer of the phosphoenolpyruvate moiety from enoylpyruvoyl-2-diphospho-5'-guanosine (EPPG) to 7,8-didemethyl-8-hydroxy-5-deazariboflavin (FO) with the formation of dehydro coenzyme F420-0 and GMP. The protein is Phosphoenolpyruvate transferase of Mycobacterium sp. (strain JLS).